The following is a 199-amino-acid chain: Protein GrpE (199 aa).

Residues 1–40 (MEKKKHGTNSISEALKVKAAVEQETATPEPTPQSETESAD) are disordered. Positions 24–36 (ETATPEPTPQSET) are enriched in polar residues.

This sequence belongs to the GrpE family. Homodimer.

The protein resides in the cytoplasm. Participates actively in the response to hyperosmotic and heat shock by preventing the aggregation of stress-denatured proteins, in association with DnaK and GrpE. It is the nucleotide exchange factor for DnaK and may function as a thermosensor. Unfolded proteins bind initially to DnaJ; upon interaction with the DnaJ-bound protein, DnaK hydrolyzes its bound ATP, resulting in the formation of a stable complex. GrpE releases ADP from DnaK; ATP binding to DnaK triggers the release of the substrate protein, thus completing the reaction cycle. Several rounds of ATP-dependent interactions between DnaJ, DnaK and GrpE are required for fully efficient folding. This chain is Protein GrpE, found in Geotalea uraniireducens (strain Rf4) (Geobacter uraniireducens).